Here is a 252-residue protein sequence, read N- to C-terminus: 3-deoxy-manno-octulosonate cytidylyltransferase 2 (252 aa).

Belongs to the KdsB family.

The protein localises to the cytoplasm. The catalysed reaction is 3-deoxy-alpha-D-manno-oct-2-ulosonate + CTP = CMP-3-deoxy-beta-D-manno-octulosonate + diphosphate. Its pathway is nucleotide-sugar biosynthesis; CMP-3-deoxy-D-manno-octulosonate biosynthesis; CMP-3-deoxy-D-manno-octulosonate from 3-deoxy-D-manno-octulosonate and CTP: step 1/1. It participates in bacterial outer membrane biogenesis; lipopolysaccharide biosynthesis. Functionally, activates KDO (a required 8-carbon sugar) for incorporation into bacterial lipopolysaccharide in Gram-negative bacteria. The polypeptide is 3-deoxy-manno-octulosonate cytidylyltransferase 2 (Actinobacillus pleuropneumoniae serotype 5b (strain L20)).